Reading from the N-terminus, the 457-residue chain is tRNA-2-methylthio-N(6)-dimethylallyladenosine synthase (457 aa).

Residues 3–120 (KKVYVKTFGC…LPQMIDARRE (118 aa)) enclose the MTTase N-terminal domain. [4Fe-4S] cluster is bound by residues Cys-12, Cys-49, Cys-83, Cys-157, Cys-161, and Cys-164. The region spanning 143 to 377 (RVEGPSAFVS…QATIEENVAR (235 aa)) is the Radical SAM core domain. One can recognise a TRAM domain in the interval 380-447 (QSMLGKVERI…PHSLRGELVL (68 aa)).

Belongs to the methylthiotransferase family. MiaB subfamily. Monomer. Requires [4Fe-4S] cluster as cofactor.

It is found in the cytoplasm. It catalyses the reaction N(6)-dimethylallyladenosine(37) in tRNA + (sulfur carrier)-SH + AH2 + 2 S-adenosyl-L-methionine = 2-methylsulfanyl-N(6)-dimethylallyladenosine(37) in tRNA + (sulfur carrier)-H + 5'-deoxyadenosine + L-methionine + A + S-adenosyl-L-homocysteine + 2 H(+). In terms of biological role, catalyzes the methylthiolation of N6-(dimethylallyl)adenosine (i(6)A), leading to the formation of 2-methylthio-N6-(dimethylallyl)adenosine (ms(2)i(6)A) at position 37 in tRNAs that read codons beginning with uridine. This Burkholderia pseudomallei (strain 1710b) protein is tRNA-2-methylthio-N(6)-dimethylallyladenosine synthase.